Here is a 327-residue protein sequence, read N- to C-terminus: MKRIGLVFCALLLLLGMGARPAAAYPYYAQMAYDNPREATGKIVCANCHLNAMPTRAEVPQAVTPGQVFTIKVGIPYDLSKQQVLADGSKGGLNVGAVVVLPEGFRLATEAEMTEEQRQETAETYITPYSDAKPNILLVGPLPGEQHQEIVFPVVAPDPKEDPSVAFMKYRVYIGANRGRGQLNPDGSLSNNNVFRAPATGRLVNIATLDSDISDLPAELASLVPPEYELPGTRVLSFESESGIHNLVVPPGPELVVAVGDSVKEGDPVTNNPNVGGFGQVERDLVLQSPDRVKWLVAFLAAITITQVLLVLKKKQVELIQAAEILG.

The signal sequence occupies residues 1-24 (MKRIGLVFCALLLLLGMGARPAAA). 4 residues coordinate heme: Tyr25, Cys45, Cys48, and His49. Residues 293 to 313 (VKWLVAFLAAITITQVLLVLK) form a helical membrane-spanning segment.

This sequence belongs to the cytochrome f family. As to quaternary structure, the 4 large subunits of the cytochrome b6-f complex are cytochrome b6, subunit IV (17 kDa polypeptide, PetD), cytochrome f and the Rieske protein, while the 4 small subunits are PetG, PetL, PetM and PetN. The complex functions as a dimer. It depends on heme as a cofactor.

The protein resides in the cellular thylakoid membrane. In terms of biological role, component of the cytochrome b6-f complex, which mediates electron transfer between photosystem II (PSII) and photosystem I (PSI), cyclic electron flow around PSI, and state transitions. The chain is Cytochrome f from Synechococcus sp. (strain JA-2-3B'a(2-13)) (Cyanobacteria bacterium Yellowstone B-Prime).